We begin with the raw amino-acid sequence, 264 residues long: Cell division protein FtsQ (264 aa).

The segment at 1–24 (MAGPTTAERGDRQQESSGPPPARW) is disordered. The Cytoplasmic portion of the chain corresponds to 1 to 31 (MAGPTTAERGDRQQESSGPPPARWSGTRRLR). Residues 32-52 (ALVVLAALLVLLAGGCAWLLY) traverse the membrane as a helical segment. At 53-264 (GSSWLRLERV…VPTAPASSGS (212 aa)) the chain is on the extracellular side. The POTRA domain occupies 57–126 (LRLERVSVSG…HGIGLKVTER (70 aa)).

This sequence belongs to the FtsQ/DivIB family. FtsQ subfamily.

It is found in the cell membrane. Essential cell division protein. This is Cell division protein FtsQ from Streptomyces collinus.